Consider the following 170-residue polypeptide: Large ribosomal subunit protein uL10 (170 aa).

This sequence belongs to the universal ribosomal protein uL10 family. In terms of assembly, part of the ribosomal stalk of the 50S ribosomal subunit. The N-terminus interacts with L11 and the large rRNA to form the base of the stalk. The C-terminus forms an elongated spine to which L12 dimers bind in a sequential fashion forming a multimeric L10(L12)X complex.

Functionally, forms part of the ribosomal stalk, playing a central role in the interaction of the ribosome with GTP-bound translation factors. This is Large ribosomal subunit protein uL10 from Novosphingobium aromaticivorans (strain ATCC 700278 / DSM 12444 / CCUG 56034 / CIP 105152 / NBRC 16084 / F199).